A 161-amino-acid polypeptide reads, in one-letter code: Putative sporulation sigma factor-processing peptidase (161 aa).

The active site involves Asp38.

Belongs to the peptidase U4 family.

Functionally, probably activates the RNA polymerase sigma-35 factor at the stage II of sporulation. In Bacillus thuringiensis subsp. kurstaki, this protein is Putative sporulation sigma factor-processing peptidase.